The following is a 199-amino-acid chain: Translation initiation factor IF-3 (199 aa).

This sequence belongs to the IF-3 family. As to quaternary structure, monomer.

Its subcellular location is the cytoplasm. IF-3 binds to the 30S ribosomal subunit and shifts the equilibrium between 70S ribosomes and their 50S and 30S subunits in favor of the free subunits, thus enhancing the availability of 30S subunits on which protein synthesis initiation begins. This Mycoplasmopsis pulmonis (strain UAB CTIP) (Mycoplasma pulmonis) protein is Translation initiation factor IF-3.